The following is a 419-amino-acid chain: MLAARTGAAGSQIAEESSKLRKQAAFSGGSKDRSPKKASENVKDSSLSPSGQSQVRARQLALLREVEMNWYLKLCELSSEHTTAYTTGMPHRNLGKSGLRVSCLGLGTWVTFGGQISDEVAERLMTIAYESGVNLFDTAEVYAAGKAEVILGSIIKKKGWRRSSLVITTKLYWGGKAETERGLSRKHIIEGLKGSLQRLQLEYVDVVFANRPDSNTPMEEIVRAMTHVINQGMAMYWGTSRWSAMEIMEAYSVARQFNMIPPVCEQAEYHLFQREKVEVQLPELYHKIGVGAMTWSPLACGIISGKYGNGVPESSRASLKCYQWLKERIVSEEGRKQQNKLKDLSPIAERLGCTLPQLAVAWCLRNEGVSSVLLGSSTPEQLIENLGAIQVLPKMTSHVVNEIDNILRNKPYSKKDYRS.

Positions 1–51 (MLAARTGAAGSQIAEESSKLRKQAAFSGGSKDRSPKKASENVKDSSLSPSG) are disordered. Basic and acidic residues predominate over residues 30 to 43 (SKDRSPKKASENVK). Positions 108, 109, 115, and 137 each coordinate NADP(+). Tyr-142 serves as the catalytic Proton donor/acceptor. NADP(+) is bound by residues Asn-210, Ser-240, Arg-241, Gln-266, Trp-295, Ser-296, Pro-297, Leu-298, Ala-299, Cys-300, Lys-306, Arg-316, Gly-375, Ser-377, Gln-381, Glu-384, and Asn-385.

This sequence belongs to the shaker potassium channel beta subunit family. Homotetramer. Interaction with tetrameric potassium channel alpha subunits gives rise to a heterooctamer. Identified in potassium channel complexes containing KCNA1, KCNA2, KCNA4, KCNA5, KCNA6, KCNAB1 and KCNAB2. Part of a complex containing KCNA1, KCNA4 and LGI1; interaction with LGI1 inhibits down-regulation of KCNA1 channel activity. Interacts with the dimer formed by GNB1 and GNG2; this enhances KCNA1 binding. Interacts with SQSTM1. Detected in portal vein myocytes (at protein level).

Its subcellular location is the cytoplasm. It localises to the membrane. It is found in the cell membrane. The catalysed reaction is a primary alcohol + NADP(+) = an aldehyde + NADPH + H(+). It catalyses the reaction a secondary alcohol + NADP(+) = a ketone + NADPH + H(+). Functionally, regulatory subunit of the voltage-gated potassium (Kv) channels composed of pore-forming and potassium-conducting alpha subunits and of regulatory beta subunits. The beta-1/KCNAB1 cytoplasmic subunit mediates closure of delayed rectifier potassium channels by physically obstructing the pore via its N-terminal domain and increases the speed of channel closure for other family members. Promotes the inactivation of KCNA1, KCNA2, KCNA4, KCNA5 and KCNA6 alpha subunit-containing channels. Displays nicotinamide adenine dinucleotide phosphate (NADPH)-dependent aldoketoreductase activity by catalyzing the NADPH-dependent reduction of a variety of endogenous aldehydes and ketones. The binding of NADPH is required for efficient down-regulation of potassium channel activity. Oxidation of the bound NADPH restrains N-terminal domain from blocking the channel, thereby decreasing N-type inactivation of potassium channel activity. This is Voltage-gated potassium channel subunit beta-1 (KCNAB1) from Oryctolagus cuniculus (Rabbit).